A 348-amino-acid chain; its full sequence is Replication-associated protein (348 aa).

Low complexity predominate over residues 1 to 17 (MRAPASSAASNRPGPSN). The interval 1–22 (MRAPASSAASNRPGPSNHPTPR) is disordered. The region spanning 22–125 (RWNSKQFFLT…NGDSDEMGEL (104 aa)) is the CRESS-DNA virus Rep endonuclease domain. Residues 29-32 (FLTY) carry the RCR-1 motif. A divalent metal cation contacts are provided by Glu63, His71, and His73. The RCR-2 motif lies at 71 to 73 (HLH). The For DNA cleavage activity role is filled by Tyr111. An RCR-3 motif is present at residues 111-114 (YISK). Residues 176-188 (SAAALFTEPPPVY) form an oligomerization region. ATP is bound at residue 228–235 (GPSRTGKT). The transactivation stretch occupies residues 251–269 (VDFTHYDKDAIYNVIDDVP). A Nuclear localization signal motif is present at residues 291 to 301 (KYGKKKKIPGG).

Belongs to the geminiviridae Rep protein family. As to quaternary structure, homooligomer. Rep binds to repeated DNA motifs (iterons). Forms the O-complex, which is a Rep-DNA complex involved in the initiation of RCR. Part of the C- and V-complexes which are RepA-Rep-DNA complexes involved in the c-sense and v-sense transcription. Mg(2+) is required as a cofactor. Requires Mn(2+) as cofactor.

The protein localises to the host nucleus. In terms of biological role, essential for the replication of viral ssDNA. The closed circular ssDNA genome is first converted to a superhelical dsDNA. Rep binds a specific region at the genome origin of replication. It introduces an endonucleolytic nick within the conserved sequence 5'-TAATATTAC-3' in the intergenic region of the genome present in all geminiviruses, thereby initiating the rolling circle replication (RCR). Following cleavage, binds covalently to the 5'-phosphate of DNA as a tyrosyl ester. The cleavage gives rise to a free 3'-OH that serves as a primer for the cellular DNA polymerase. The polymerase synthesizes the (+) strand DNA by rolling circle mechanism. After one round of replication, a Rep-catalyzed nucleotidyl transfer reaction releases a circular single-stranded virus genome, thereby terminating the replication. Displays origin-specific DNA cleavage, nucleotidyl transferase, ATPase and helicase activities. Acts as an inhibitor of C-sense gene transcription. The chain is Replication-associated protein from Miscanthus streak virus (isolate 91) (MiSV).